Here is a 642-residue protein sequence, read N- to C-terminus: Mini-chromosome maintenance complex-binding protein (642 aa).

A compositionally biased stretch (polar residues) spans alanine 151–proline 161. Residues alanine 151 to glycine 196 form a disordered region. The residue at position 154 (serine 154) is a Phosphoserine. A Phosphothreonine modification is found at threonine 160. A phosphoserine mark is found at serine 167 and serine 298.

It belongs to the MCMBP family. As to quaternary structure, interacts with the MCM complex: associates with the MCM3-7 complex which lacks MCM2, while it does not interact with the MCM complex when MCM2 is present (MCM2-7 complex). Interacts with the RPA complex, when composed of all RPA1, RPA2 and RPA3 components, but not with RPA1 or RPA2 alone.

The protein localises to the nucleus. Associated component of the MCM complex that acts as a regulator of DNA replication. Binds to the MCM complex during late S phase and promotes the disassembly of the MCM complex from chromatin, thereby acting as a key regulator of pre-replication complex (pre-RC) unloading from replicated DNA. Can dissociate the MCM complex without addition of ATP; probably acts by destabilizing interactions of each individual subunits of the MCM complex. Required for sister chromatid cohesion. The sequence is that of Mini-chromosome maintenance complex-binding protein (Mcmbp) from Mus musculus (Mouse).